Consider the following 318-residue polypeptide: Probable tyrosine phosphatase protein N1 (318 aa).

The Tyrosine-protein phosphatase domain maps to 26–292 (IVRLEHHQVI…LILQPGYYVL (267 aa)). The active-site Phosphocysteine intermediate is cysteine 233.

Belongs to the protein-tyrosine phosphatase family.

The enzyme catalyses O-phospho-L-tyrosyl-[protein] + H2O = L-tyrosyl-[protein] + phosphate. This chain is Probable tyrosine phosphatase protein N1 (N3), found in Microplitis demolitor bracovirus (isolate Webb) (MdBV).